Here is a 147-residue protein sequence, read N- to C-terminus: SsrA-binding protein (147 aa).

The tract at residues 119–147 (AKGKKQHDKRESEKQKEWERDKQRLMRPK) is disordered. Positions 126–147 (DKRESEKQKEWERDKQRLMRPK) are enriched in basic and acidic residues.

It belongs to the SmpB family.

It is found in the cytoplasm. Functionally, required for rescue of stalled ribosomes mediated by trans-translation. Binds to transfer-messenger RNA (tmRNA), required for stable association of tmRNA with ribosomes. tmRNA and SmpB together mimic tRNA shape, replacing the anticodon stem-loop with SmpB. tmRNA is encoded by the ssrA gene; the 2 termini fold to resemble tRNA(Ala) and it encodes a 'tag peptide', a short internal open reading frame. During trans-translation Ala-aminoacylated tmRNA acts like a tRNA, entering the A-site of stalled ribosomes, displacing the stalled mRNA. The ribosome then switches to translate the ORF on the tmRNA; the nascent peptide is terminated with the 'tag peptide' encoded by the tmRNA and targeted for degradation. The ribosome is freed to recommence translation, which seems to be the essential function of trans-translation. The polypeptide is SsrA-binding protein (Nitrosospira multiformis (strain ATCC 25196 / NCIMB 11849 / C 71)).